Consider the following 302-residue polypeptide: Protocatechuate 4,5-dioxygenase beta chain (302 aa).

Composed of two subunits (alpha and beta) in a 1:1 ratio. Fe(2+) is required as a cofactor.

The catalysed reaction is 3,4-dihydroxybenzoate + O2 = 4-carboxy-2-hydroxy-cis,cis-muconate 6-semialdehyde + H(+). In terms of biological role, responsible for the aromatic ring fission of protocatechuate. This is Protocatechuate 4,5-dioxygenase beta chain (ligB) from Sphingobium sp. (strain NBRC 103272 / SYK-6).